We begin with the raw amino-acid sequence, 508 residues long: H/ACA ribonucleoprotein complex subunit 4 (508 aa).

Residues 1-29 (MADVEVRKEKKKKKIKEEPLDGDDIGTLQ) form a disordered region. Aspartate 123 serves as the catalytic Nucleophile. In terms of domain architecture, PUA spans 294-369 (HKRIIMKDSS…VVAKIKRVIM (76 aa)). The segment at 423–508 (AAQEVSPTNG…KDRDRDEAQE (86 aa)) is disordered. Serine 442 carries the phosphoserine modification. Over residues 442–457 (STSSVEETAAAAVSEE) the composition is skewed to low complexity. Threonine 443 carries the post-translational modification Phosphothreonine. Phosphoserine is present on residues serine 444 and serine 445. Threonine 449 carries the post-translational modification Phosphothreonine. Residue serine 455 is modified to Phosphoserine. The residue at position 458 (threonine 458) is a Phosphothreonine. Residues 475–485 (EAPEAAEEEAE) show a composition bias toward acidic residues. Positions 499–508 (KDRDRDEAQE) are enriched in basic and acidic residues.

The protein belongs to the pseudouridine synthase TruB family. As to quaternary structure, component of the box H/ACA small nucleolar ribonucleoprotein (H/ACA snoRNP) complex consisting of Nop60B, Gar1, NPH2 and Nop10, and associated with H/ACA-type snoRNAs. In terms of tissue distribution, expressed at higher levels in females than in males. As to expression, expressed almost exclusively in females with high levels of expression in the ovary.

It localises to the nucleus. Its subcellular location is the nucleolus. The enzyme catalyses a uridine in RNA = a pseudouridine in RNA. Its function is as follows. Catalytic subunit of the box H/ACA small nucleolar ribonucleoprotein (H/ACA snoRNP) complex, which catalyzes pseudouridylation of rRNA. This involves the isomerization of uridine such that the ribose is subsequently attached to C5, instead of the normal N1. Pseudouridine ('psi') residues may serve to stabilize the conformation of rRNAs. Required for ribosome biogenesis; plays a central role in ribosomal RNA processing. H/ACA snoRNP complex-dependent ribosome biogenesis is important in female germline cell differentiation during oogenesis. Essential for viability and female fertility. Required for maintenance of the germline stem cell lineage during spermatogenesis. This Drosophila melanogaster (Fruit fly) protein is H/ACA ribonucleoprotein complex subunit 4.